The sequence spans 76 residues: UPF0291 protein MW2494 (76 aa).

It belongs to the UPF0291 family.

Its subcellular location is the cytoplasm. The chain is UPF0291 protein MW2494 from Staphylococcus aureus (strain MW2).